Consider the following 368-residue polypeptide: Alanine racemase (368 aa).

The active-site Proton acceptor; specific for D-alanine is Lys40. Residue Lys40 is modified to N6-(pyridoxal phosphate)lysine. Arg134 contributes to the substrate binding site. Tyr263 serves as the catalytic Proton acceptor; specific for L-alanine. Residue Met310 coordinates substrate.

Belongs to the alanine racemase family. Requires pyridoxal 5'-phosphate as cofactor.

The catalysed reaction is L-alanine = D-alanine. Its pathway is amino-acid biosynthesis; D-alanine biosynthesis; D-alanine from L-alanine: step 1/1. Functionally, catalyzes the interconversion of L-alanine and D-alanine. May also act on other amino acids. In Listeria monocytogenes serotype 4a (strain HCC23), this protein is Alanine racemase (alr).